A 508-amino-acid chain; its full sequence is Photosystem II CP47 reaction center protein (508 aa).

6 consecutive transmembrane segments (helical) span residues 21–36, 101–115, 140–156, 203–218, 237–252, and 457–472; these read SVHIMHTALVAGWAGS, IVFSGLCFLAAIWHW, GIHLFLSGVACFGFGAF, IAAGILGILAGLFHLS, VLSSSIAAVFFAAFIV, and TFALLFFSGHIWHGAR.

Belongs to the PsbB/PsbC family. PsbB subfamily. PSII is composed of 1 copy each of membrane proteins PsbA, PsbB, PsbC, PsbD, PsbE, PsbF, PsbH, PsbI, PsbJ, PsbK, PsbL, PsbM, PsbT, PsbX, PsbY, PsbZ, Psb30/Ycf12, at least 3 peripheral proteins of the oxygen-evolving complex and a large number of cofactors. It forms dimeric complexes. The cofactor is Binds multiple chlorophylls. PSII binds additional chlorophylls, carotenoids and specific lipids..

The protein localises to the plastid. The protein resides in the chloroplast thylakoid membrane. Functionally, one of the components of the core complex of photosystem II (PSII). It binds chlorophyll and helps catalyze the primary light-induced photochemical processes of PSII. PSII is a light-driven water:plastoquinone oxidoreductase, using light energy to abstract electrons from H(2)O, generating O(2) and a proton gradient subsequently used for ATP formation. The chain is Photosystem II CP47 reaction center protein from Pinus thunbergii (Japanese black pine).